Consider the following 195-residue polypeptide: Imidazoleglycerol-phosphate dehydratase (195 aa).

Belongs to the imidazoleglycerol-phosphate dehydratase family.

The protein localises to the cytoplasm. The enzyme catalyses D-erythro-1-(imidazol-4-yl)glycerol 3-phosphate = 3-(imidazol-4-yl)-2-oxopropyl phosphate + H2O. It participates in amino-acid biosynthesis; L-histidine biosynthesis; L-histidine from 5-phospho-alpha-D-ribose 1-diphosphate: step 6/9. The sequence is that of Imidazoleglycerol-phosphate dehydratase from Koribacter versatilis (strain Ellin345).